Reading from the N-terminus, the 146-residue chain is Putative pre-16S rRNA nuclease (146 aa).

The protein belongs to the YqgF nuclease family.

It localises to the cytoplasm. Its function is as follows. Could be a nuclease involved in processing of the 5'-end of pre-16S rRNA. This chain is Putative pre-16S rRNA nuclease, found in Burkholderia mallei (strain SAVP1).